The primary structure comprises 286 residues: Phosphoribosylaminoimidazole-succinocarboxamide synthase (286 aa).

Belongs to the SAICAR synthetase family.

It carries out the reaction 5-amino-1-(5-phospho-D-ribosyl)imidazole-4-carboxylate + L-aspartate + ATP = (2S)-2-[5-amino-1-(5-phospho-beta-D-ribosyl)imidazole-4-carboxamido]succinate + ADP + phosphate + 2 H(+). It functions in the pathway purine metabolism; IMP biosynthesis via de novo pathway; 5-amino-1-(5-phospho-D-ribosyl)imidazole-4-carboxamide from 5-amino-1-(5-phospho-D-ribosyl)imidazole-4-carboxylate: step 1/2. The polypeptide is Phosphoribosylaminoimidazole-succinocarboxamide synthase (Actinobacillus succinogenes (strain ATCC 55618 / DSM 22257 / CCUG 43843 / 130Z)).